Here is a 375-residue protein sequence, read N- to C-terminus: Nucleolysin TIAR (375 aa).

2 consecutive RRM domains span residues 9–85 (RTLY…WATT) and 97–175 (FHVF…WATR). The residue at position 122 (Lys122) is an N6-acetyllysine. Ser201 is subject to Phosphoserine. An RRM 3 domain is found at 205 to 277 (CTVYCGGIAS…HVVKCYWGKE (73 aa)). Residues 345–375 (FGAQPPQGQAPPPVIPPPNQAGYGMASYQTQ) form a disordered region. The span at 352 to 363 (GQAPPPVIPPPN) shows a compositional bias: pro residues.

Interacts with FASTK. Phosphorylated by MAPK14 following DNA damage, releasing TIAR from GADD45A mRNA. In terms of tissue distribution, expressed in brain, heart, kidney, lung and skeletal muscle.

The protein localises to the nucleus. It localises to the cytoplasm. It is found in the cytolytic granule. Its subcellular location is the stress granule. In terms of biological role, RNA-binding protein involved in alternative pre-RNA splicing and in cytoplasmic stress granules formation. Shows a preference for uridine-rich RNAs. Activates splicing of alternative exons with weak 5' splice sites followed by a U-rich stretch on its own pre-mRNA and on TIA1 mRNA. Promotes the inclusion of TIA1 exon 5 to give rise to the long isoform (isoform a) of TIA1. Acts downstream of the stress-induced phosphorylation of EIF2S1/EIF2A to promote the recruitment of untranslated mRNAs to cytoplasmic stress granules (SG). Possesses nucleolytic activity against cytotoxic lymphocyte target cells. May be involved in apoptosis. This Homo sapiens (Human) protein is Nucleolysin TIAR (TIAL1).